The primary structure comprises 511 residues: ATP synthase subunit alpha (511 aa).

169-176 lines the ATP pocket; sequence GDRKTGKT.

The protein belongs to the ATPase alpha/beta chains family. In terms of assembly, F-type ATPases have 2 components, CF(1) - the catalytic core - and CF(0) - the membrane proton channel. CF(1) has five subunits: alpha(3), beta(3), gamma(1), delta(1), epsilon(1). CF(0) has three main subunits: a(1), b(2) and c(9-12). The alpha and beta chains form an alternating ring which encloses part of the gamma chain. CF(1) is attached to CF(0) by a central stalk formed by the gamma and epsilon chains, while a peripheral stalk is formed by the delta and b chains.

The protein localises to the cell membrane. The enzyme catalyses ATP + H2O + 4 H(+)(in) = ADP + phosphate + 5 H(+)(out). Functionally, produces ATP from ADP in the presence of a proton gradient across the membrane. The alpha chain is a regulatory subunit. The protein is ATP synthase subunit alpha of Latilactobacillus sakei subsp. sakei (strain 23K) (Lactobacillus sakei subsp. sakei).